The sequence spans 122 residues: Large ribosomal subunit protein uL14 (122 aa).

It belongs to the universal ribosomal protein uL14 family. Part of the 50S ribosomal subunit. Forms a cluster with proteins L3 and L19. In the 70S ribosome, L14 and L19 interact and together make contacts with the 16S rRNA in bridges B5 and B8.

Its function is as follows. Binds to 23S rRNA. Forms part of two intersubunit bridges in the 70S ribosome. The chain is Large ribosomal subunit protein uL14 from Paracoccus denitrificans (strain Pd 1222).